Here is a 513-residue protein sequence, read N- to C-terminus: MASGSVAECLQQETTCPVCLQYFAEPMMLDCGHNICCACLARCWGTAETNVSCPQCRETFPQRHMRPNRHLANVTQLVKQLRTERPSGPGGEMGVCEKHREPLKLYCEEDQMPICVVCDRSREHRGHSVLPLEEAVEGFKEQIQNQLDHLKRVKDLKKRRRAQGEQARAELLSLTQMEREKIVWEFEQLYHSLKEHEYRLLARLEELDLAIYNSINGAITQFSCNISHLSSLIAQLEEKQQQPTRELLQDIGDTLSRAERIRIPEPWITPPDLQEKIHIFAQKCLFLTESLKQFTEKMQSDMEKIQELREAQLYSVDVTLDPDTAYPSLILSDNLRQVRYSYLQQDLPDNPERFNLFPCVLGSPCFIAGRHYWEVEVGDKAKWTIGVCEDSVCRKGGVTSAPQNGFWAVSLWYGKEYWALTSPMTALPLRTPLQRVGIFLDYDAGEVSFYNVTERCHTFTFSHATFCGPVRPYFSLSYSGGKSAAPLIICPMSGIDGFSGHVGNHGHSMETSP.

The segment at 16–57 (CPVCLQYFAEPMMLDCGHNICCACLARCWGTAETNVSCPQCR) adopts an RING-type zinc-finger fold. Cysteine 96, histidine 99, cysteine 118, and histidine 124 together coordinate Zn(2+). The B box-type zinc-finger motif lies at 96–127 (CEKHREPLKLYCEEDQMPICVVCDRSREHRGH). Coiled coils occupy residues 132–172 (LEEA…AELL) and 282–311 (QKCL…LREA). The 195-residue stretch at 298-492 (MQSDMEKIQE…SAAPLIICPM (195 aa)) folds into the B30.2/SPRY domain.

The protein belongs to the TRIM/RBCC family. In terms of assembly, homomultimerizes. Part of a complex consisting of TRIM27, USP7 and MAGEL2; directly interacts with USP7. Interacts with PML, EIF3S6, EPC1, CHD4 and EID1. Interacts with MAGED4, MAGEF1 and MAGEL2. Interacts with PTPN11. Interacts with autophagy receptor p62/SQSTM1. As to quaternary structure, (Microbial infection) Interacts with M.tuberculosis PtpA, whick blocks TRIM27-promoted JNK/p38 MAPK pathway activation and cell apoptosis. (Microbial infection) Interacts with herpes simplex virus protein ICP0. As to expression, expressed in testis namely within the seminiferous tubules.

It is found in the nucleus. The protein localises to the cytoplasm. It localises to the PML body. Its subcellular location is the early endosome. The protein resides in the mitochondrion. It catalyses the reaction S-ubiquitinyl-[E2 ubiquitin-conjugating enzyme]-L-cysteine + [acceptor protein]-L-lysine = [E2 ubiquitin-conjugating enzyme]-L-cysteine + N(6)-ubiquitinyl-[acceptor protein]-L-lysine.. It functions in the pathway protein modification; protein ubiquitination. In terms of biological role, E3 ubiquitin-protein ligase that mediates ubiquitination of various substrates and thereby plays a role in diffent processes including proliferation, innate immunity, apoptosis, immune response or autophagy. Ubiquitinates PIK3C2B and inhibits its activity by mediating the formation of 'Lys-48'-linked polyubiquitin chains; the function inhibits CD4 T-cell activation. Acts as a regulator of retrograde transport: together with MAGEL2, mediates the formation of 'Lys-63'-linked polyubiquitin chains at 'Lys-220' of WASHC1, leading to promote endosomal F-actin assembly. Has a transcriptional repressor activity by cooperating with EPC1. Induces apoptosis by activating Jun N-terminal kinase and p38 kinase and also increases caspase-3-like activity independently of mitochondrial events. May function in male germ cell development. Has DNA-binding activity and preferentially bound to double-stranded DNA. Forms a complex with and ubiquitinates the ubiquitin-specific protease USP7, which in turn deubiquitinates RIPK1 resulting in the positive regulation of TNF-alpha-induced apoptosis. In addition, acts with USP7 or PTPN11 as an inhibitor of the antiviral signaling pathway by promoting kinase TBK1 ubiquitination and degradation. Acts as a negative regulator of NOD2 signaling by mediating ubiquitination of NOD2, promoting its degradation by the proteasome. Alternatively, facilitates mitophagy via stabilization of active TBK1. Negatively regulates autophagy flux under basal conditions by directly polyubiquitinating ULK1. During starvation-induced autophagy, catalyzes non-degradative ubiquitination of the kinase STK38L promoting its activation and phosphorylation of ULK1 leading to its ubiquitination and degradation to restrain the amplitude and duration of autophagy. Functionally, (Microbial infection) Positively regulates hepatitis C virus replication by suppressing type I IFN response during infection. This chain is Zinc finger protein RFP, found in Homo sapiens (Human).